The primary structure comprises 118 residues: uncharacterized protein (118 aa).

Helical transmembrane passes span 12-32 (IISL…FATF), 39-59 (LMPH…SLFI), 63-83 (IIGY…CPTI), and 98-118 (SAHL…VILF).

The protein resides in the cell membrane. This is an uncharacterized protein from Methanocaldococcus jannaschii (strain ATCC 43067 / DSM 2661 / JAL-1 / JCM 10045 / NBRC 100440) (Methanococcus jannaschii).